A 339-amino-acid chain; its full sequence is IQPARRHTKNTNMAKHTTKGTGHSMFISPRKIAHIPQINCEKQKLVLEVRSIYNDSWRVRGVLPFMINDFINQLNLTGKYRFGPVVYYQINIKEIPPLIYDVIRMEASKGYLWLDERNLDTHSLIGVYKCRVPMDLLVLKGLSNVILTTVNKAQPNISKFKDLKAMHYAFLNRQENVVKVVSIDLSDCMDYIPTSRILTSQKFTKQYGLYYNLVEWIIDLPIYDFHNHSFFPSTGITPIGEITHVILHNFYQNTVDSLLESWYPGITYSRYGHELFILCKQTDEFTIDDCDIDNILEVLDLYSVDINWSSDGLLMADNNDKALILHEDGSLEVWNSEDI.

Residues 1–24 (IQPARRHTKNTNMAKHTTKGTGHS) form a disordered region. Polar residues predominate over residues 10–21 (NTNMAKHTTKGT).

It localises to the mitochondrion. This is an uncharacterized protein from Zea mays (Maize).